The following is a 448-amino-acid chain: Phosphoglucosamine mutase (448 aa).

Ser104 serves as the catalytic Phosphoserine intermediate. The Mg(2+) site is built by Ser104, Asp241, Asp243, and Asp245. Ser104 is modified (phosphoserine).

The protein belongs to the phosphohexose mutase family. Mg(2+) serves as cofactor. Activated by phosphorylation.

It carries out the reaction alpha-D-glucosamine 1-phosphate = D-glucosamine 6-phosphate. Functionally, catalyzes the conversion of glucosamine-6-phosphate to glucosamine-1-phosphate. This is Phosphoglucosamine mutase from Nocardioides sp. (strain ATCC BAA-499 / JS614).